The sequence spans 169 residues: Putative pre-16S rRNA nuclease (169 aa).

Residues 1-19 (MTDSDHRLPDRPGEGDPGR) show a composition bias toward basic and acidic residues. Residues 1–22 (MTDSDHRLPDRPGEGDPGRGRR) form a disordered region.

Belongs to the YqgF nuclease family.

The protein resides in the cytoplasm. Its function is as follows. Could be a nuclease involved in processing of the 5'-end of pre-16S rRNA. In Mycobacterium sp. (strain JLS), this protein is Putative pre-16S rRNA nuclease.